Consider the following 532-residue polypeptide: Fe-S cluster assembly factor HCF101, chloroplastic (532 aa).

Residues M1–K61 constitute a chloroplast transit peptide. At A62 the chain carries N-acetylalanine. C184–S191 serves as a coordination point for ATP.

It belongs to the Mrp/NBP35 ATP-binding proteins family. Requires [4Fe-4S] cluster as cofactor. Expressed in aerial tissues exposed to light. Very low expression in roots.

The protein resides in the plastid. It localises to the chloroplast stroma. In terms of biological role, required for photosystem I (PSI) biosynthesis and assembly. May serve as a chloroplast scaffold protein that specifically assembles iron-sulfur (4Fe-4S) clusters and transfers them to the chloroplast PSI and ferredoxin-thioredoxin (FTR) complexes. Can assemble a 4Fe-4S cluster and transfer it to apoproteins in yeast cells. Probably not required for assembly or stability of plastidic 2Fe-2S clusters. The chain is Fe-S cluster assembly factor HCF101, chloroplastic (HCF101) from Arabidopsis thaliana (Mouse-ear cress).